We begin with the raw amino-acid sequence, 290 residues long: NAD kinase (290 aa).

Catalysis depends on Asp72, which acts as the Proton acceptor. Residues 72–73, Lys77, 145–146, Asp175, 186–191, and Ala210 each bind NAD(+); these read DG, NE, and TAYSLS.

This sequence belongs to the NAD kinase family. The cofactor is a divalent metal cation.

The protein resides in the cytoplasm. It catalyses the reaction NAD(+) + ATP = ADP + NADP(+) + H(+). Functionally, involved in the regulation of the intracellular balance of NAD and NADP, and is a key enzyme in the biosynthesis of NADP. Catalyzes specifically the phosphorylation on 2'-hydroxyl of the adenosine moiety of NAD to yield NADP. The chain is NAD kinase from Bacteroides fragilis (strain YCH46).